The primary structure comprises 322 residues: Deoxycytidylate deaminase (322 aa).

A CMP/dCMP-type deaminase domain is found at 173–311 (SWDSYFMEMA…SLLQAAGVQL (139 aa)). Residue histidine 246 coordinates Zn(2+). Glutamate 248 (proton donor) is an active-site residue. Zn(2+)-binding residues include cysteine 273 and cysteine 276.

The protein belongs to the cytidine and deoxycytidylate deaminase family. The cofactor is Zn(2+).

The protein localises to the cytoplasm. It localises to the nucleus. It carries out the reaction dCMP + H2O + H(+) = dUMP + NH4(+). Functionally, supplies the nucleotide substrate for thymidylate synthetase. The chain is Deoxycytidylate deaminase from Schizosaccharomyces pombe (strain 972 / ATCC 24843) (Fission yeast).